The sequence spans 487 residues: Histamine H1 receptor (487 aa).

Residues 1–29 lie on the Extracellular side of the membrane; it reads MSLPNSSCLLEDKMCEGNKTTMASPQLMP. N-linked (GlcNAc...) asparagine glycans are attached at residues asparagine 5 and asparagine 18. Residues 30-50 traverse the membrane as a helical segment; that stretch reads LVVVLSTICLVTVGLNLLVLY. Residues 51-64 are Cytoplasmic-facing; it reads AVRSERKLHTVGNL. Residues 65-89 traverse the membrane as a helical segment; sequence YIVSLSVADLIVGAVVMPMNILYLL. Residues 90–97 lie on the Extracellular side of the membrane; the sequence is MSKWSLGR. A helical membrane pass occupies residues 98-123; sequence PLCLFWLSMDYVASTASIFSVFILCI. Cysteines 100 and 180 form a disulfide. Residues aspartate 107 and threonine 112 each coordinate histamine. The tract at residues 107 to 112 is important for agonist binding; it reads DYVAST. Residues 124 to 144 are Cytoplasmic-facing; sequence DRYRSVQQPLRYLKYRTKTRA. Threonine 140 and threonine 142 each carry phosphothreonine. Residues 145-164 traverse the membrane as a helical segment; that stretch reads SATILGAWFLSFLWVIPILG. The Extracellular portion of the chain corresponds to 165-188; that stretch reads WNHFMQQTSVRREDKCETDFYDVT. Residues 189–211 form a helical membrane-spanning segment; it reads WFKVMTAIINFYLPTLLMLWFYA. A histamine-binding site is contributed by asparagine 198. Topologically, residues 212–416 are cytoplasmic; it reads KIYKAVRQHC…MNRERKAAKQ (205 aa). Residue serine 230 is modified to Phosphoserine. Residues 238-261 show a composition bias toward basic and acidic residues; that stretch reads KLRPENPKGDAKKPGKESPWEVLK. The tract at residues 238 to 292 is disordered; sequence KLRPENPKGDAKKPGKESPWEVLKRKPKDAGGGSVLKSPSQTXKEMKSPVVFSQE. The residue at position 279 (threonine 279) is a Phosphothreonine. Residues serine 344 and serine 347 each carry the phosphoserine modification. Positions 345-379 are disordered; sequence EISEDQMLGDSQSFSRTDSDTTTETAPGKGKLRSG. A compositionally biased stretch (polar residues) spans 353 to 369; the sequence is GDSQSFSRTDSDTTTET. A phosphoserine mark is found at serine 380, serine 396, and serine 398. The helical transmembrane segment at 417–440 threads the bilayer; that stretch reads LGFIMAAFILCWIPYFIFFMVIAF. The interval 424–428 is important for agonist binding; it reads FILCW. Tyrosine 431 serves as a coordination point for histamine. A disulfide bond links cysteine 441 and cysteine 444. Residues 441–446 are Extracellular-facing; sequence CKNCCN. A helical membrane pass occupies residues 447-469; that stretch reads EHLHMFTIWLGYINSTLNPLIYP. The Cytoplasmic segment spans residues 470–487; the sequence is LCNENFKKTFKRILHIRS.

It belongs to the G-protein coupled receptor 1 family. Post-translationally, phosphorylation at sites in the second and third cytoplasmic loops independently contribute to agonist-induced receptor down-regulation.

The protein resides in the cell membrane. Functionally, G-protein-coupled receptor for histamine, a biogenic amine that functions as an immune modulator and a neurotransmitter. Through the H1 receptor, histamine mediates the contraction of smooth muscles and increases capillary permeability due to contraction of terminal venules. Also mediates neurotransmission in the central nervous system and thereby regulates circadian rhythms, emotional and locomotor activities as well as cognitive functions. The sequence is that of Histamine H1 receptor from Pan troglodytes (Chimpanzee).